A 168-amino-acid chain; its full sequence is Protein C2-DOMAIN ABA-RELATED 3 (168 aa).

The region spanning 1 to 106 is the C2 domain; it reads MSLMDNLLGI…IEALRMELSG (106 aa). Ca(2+) contacts are provided by Arg-24, Asp-25, Asp-30, Asp-76, His-77, Asp-78, and Asp-84.

Belongs to the plant CAR protein family. As to quaternary structure, binds to PYR/PYL/RCAR abscisic acid intracellular receptors in an ABA-independent manner, both at the plasma membrane and in the nucleus. Ca(2+) serves as cofactor.

It localises to the cell membrane. It is found in the nucleus. Stimulates the GTPase/ATPase activities of Obg-like ATPases. Mediates the transient calcium-dependent interaction of PYR/PYL/RCAR abscisic acid (ABA) receptors with the plasma membrane and thus regulates ABA sensitivity. This is Protein C2-DOMAIN ABA-RELATED 3 from Arabidopsis thaliana (Mouse-ear cress).